The sequence spans 340 residues: Uroporphyrinogen decarboxylase (340 aa).

Residues 23-27, aspartate 72, tyrosine 147, threonine 202, and histidine 316 each bind substrate; that span reads RQAGR.

Belongs to the uroporphyrinogen decarboxylase family. As to quaternary structure, homodimer.

The protein resides in the cytoplasm. It carries out the reaction uroporphyrinogen III + 4 H(+) = coproporphyrinogen III + 4 CO2. Its pathway is porphyrin-containing compound metabolism; protoporphyrin-IX biosynthesis; coproporphyrinogen-III from 5-aminolevulinate: step 4/4. Functionally, catalyzes the decarboxylation of four acetate groups of uroporphyrinogen-III to yield coproporphyrinogen-III. In Geobacter metallireducens (strain ATCC 53774 / DSM 7210 / GS-15), this protein is Uroporphyrinogen decarboxylase.